Consider the following 434-residue polypeptide: MKTIFALSSGRPPAGIAVIRISGSAAADTACLLTRKKIPEARRAVLRNLYDPDSGEQLDQSLLLWLPAPKTVTGEDLLELHVHGGRAVIDAVLKTLEKLPDLRPAEAGEFTRRAFENGVISLHEAEGLGDLLTAETASQRRAALMMSGGALGRQISAWQDRLLALSGQIEASFDFAEDIEEDETESRQHLAVMKDKIAALIAEHRQFENRPTMERLRDGLRVVLAGRPNAGKSTLINALTGQDIAITAPIAGTTRDVIEVSFALKGIPMRFSDTAGLHESDDLIEKAGIERAQRAIEEADILLWLGQAEEAPKTDGEVLVLYPQIDLPERHPIPEKIDIAVSAVTGEGIDRLQEKLVEIGKKILPKEDEVTLNRRQRQLVKEAADSLALALDAEDMLIIAEAIRQACRCYDRLTGKAGVENMLDNLFSRFCIGK.

3 residues coordinate (6S)-5-formyl-5,6,7,8-tetrahydrofolate: Arg20, Glu79, and Val119. In terms of domain architecture, TrmE-type G spans 219–361; sequence GLRVVLAGRP…LQEKLVEIGK (143 aa). Residues 229–234, 248–254, and 273–276 contribute to the GTP site; these read NAGKST, APIAGTT, and DTAG. Mg(2+) is bound by residues Ser233 and Thr254. Lys434 contributes to the (6S)-5-formyl-5,6,7,8-tetrahydrofolate binding site.

The protein belongs to the TRAFAC class TrmE-Era-EngA-EngB-Septin-like GTPase superfamily. TrmE GTPase family. In terms of assembly, homodimer. Heterotetramer of two MnmE and two MnmG subunits. The cofactor is K(+).

It localises to the cytoplasm. Exhibits a very high intrinsic GTPase hydrolysis rate. Involved in the addition of a carboxymethylaminomethyl (cmnm) group at the wobble position (U34) of certain tRNAs, forming tRNA-cmnm(5)s(2)U34. This chain is tRNA modification GTPase MnmE, found in Zymomonas mobilis subsp. mobilis (strain ATCC 31821 / ZM4 / CP4).